The chain runs to 328 residues: Probable tRNA-dihydrouridine synthase (328 aa).

18-20 (PME) serves as a coordination point for FMN. The Proton donor role is filled by Cys-105. FMN-binding positions include Lys-143, 208-210 (NGD), and 232-233 (GR).

It belongs to the Dus family. The cofactor is FMN.

It catalyses the reaction a 5,6-dihydrouridine in tRNA + NAD(+) = a uridine in tRNA + NADH + H(+). It carries out the reaction a 5,6-dihydrouridine in tRNA + NADP(+) = a uridine in tRNA + NADPH + H(+). Its function is as follows. Catalyzes the synthesis of 5,6-dihydrouridine (D), a modified base found in the D-loop of most tRNAs, via the reduction of the C5-C6 double bond in target uridines. This chain is Probable tRNA-dihydrouridine synthase (dus), found in Staphylococcus aureus (strain MRSA252).